Consider the following 1032-residue polypeptide: Structural polyprotein (1032 aa).

Residue Asp23 coordinates a divalent metal cation. The Peptidase S50 domain occupies 501–723; it reads ADSPLGEEHW…QTLPHWTAGS (223 aa). Residue Ser627 is the Nucleophile of the active site. Lys670 is an active-site residue. A disordered region spans residues 986–1014; the sequence is LVNQPATAPRVPPRRIVSAQTAQTDPPGR. The interval 1021-1030 is interaction with VP1 protein; the sequence is LRRVRGEDND.

In terms of assembly, homotrimer. A central divalent metal stabilizes the VP2 trimer. Homodimer. Interacts (via C-terminus) with VP1 in the cytoplasm. Capsid VP3 interacts with VP2. In terms of processing, specific enzymatic cleavages yield mature proteins. The capsid assembly seems to be regulated by polyprotein processing. The protease VP4 cleaves itself off the polyprotein, thus releasing pre-VP2 and VP3 within the infected cell. During capsid assembly, the C-terminus of pre-VP2 is further processed by VP4, giving rise to VP2, the external capsid protein and three small peptides that all stay closely associated with the capsid.

Its subcellular location is the virion. It localises to the host cytoplasm. Functionally, capsid protein VP2 self assembles to form an icosahedral capsid with a T=13 symmetry, about 70 nm in diameter, and consisting of 260 VP2 trimers. The capsid encapsulates the genomic dsRNA. VP2 is also involved in attachment and entry into the host cell. Its function is as follows. The precursor of VP2 plays an important role in capsid assembly. First, pre-VP2 and VP2 oligomers assemble to form a procapsid. Then, the pre-VP2 intermediates may be processed into VP2 proteins by proteolytic cleavage mediated by VP4 to obtain the mature virion. The final capsid is composed of pentamers and hexamers but VP2 has a natural tendency to assemble into all-pentameric structures. Therefore pre-VP2 may be required to allow formation of the hexameric structures. Protease VP4 is a serine protease that cleaves the polyprotein into its final products. Pre-VP2 is first partially cleaved, and may be completely processed by VP4 upon capsid maturation. In terms of biological role, capsid protein VP3 plays a key role in virion assembly by providing a scaffold for the capsid made of VP2. May self-assemble to form a T=4-like icosahedral inner-capsid composed of at least 180 trimers. Plays a role in genomic RNA packaging by recruiting VP1 into the capsid and interacting with the dsRNA genome segments to form a ribonucleoprotein complex. Additionally, the interaction of the VP3 C-terminal tail with VP1 removes the inherent structural blockade of the polymerase active site. Thus, VP3 can also function as a transcriptional activator. Functionally, structural peptide 1 is a small peptide derived from pre-VP2 C-terminus. It destabilizes and perforates cell membranes, suggesting a role during entry. Its function is as follows. Structural peptide 2 is a small peptide derived from pre-VP2 C-terminus. It is not essential for the virus viability, but viral growth is affected when missing. Structural peptide 3 is a small peptide derived from pre-VP2 C-terminus. It is not essential for the virus viability, but viral growth is affected when missing. This Drosophila melanogaster (Fruit fly) protein is Structural polyprotein.